A 275-amino-acid chain; its full sequence is Large ribosomal subunit protein uL2 (275 aa).

Residues 38 to 53 are compositionally biased toward polar residues; the sequence is SSKAGRNNNGRITTRH. 2 disordered regions span residues 38–60 and 224–257; these read SSKA…GHKQ and AMNP…KGFR.

The protein belongs to the universal ribosomal protein uL2 family. Part of the 50S ribosomal subunit. Forms a bridge to the 30S subunit in the 70S ribosome.

Functionally, one of the primary rRNA binding proteins. Required for association of the 30S and 50S subunits to form the 70S ribosome, for tRNA binding and peptide bond formation. It has been suggested to have peptidyltransferase activity; this is somewhat controversial. Makes several contacts with the 16S rRNA in the 70S ribosome. This Burkholderia pseudomallei (strain 1106a) protein is Large ribosomal subunit protein uL2.